An 87-amino-acid polypeptide reads, in one-letter code: Alpha-toxin To2 (87 aa).

Positions 1-20 (MIRFVLFISCFFLIGTVVEC) are cleaved as a signal peptide. Positions 22-84 (KDGYLMEGDG…IWDSKNNKCG (63 aa)) constitute an LCN-type CS-alpha/beta domain. Intrachain disulfides connect Cys-32-Cys-83, Cys-36-Cys-58, Cys-44-Cys-64, and Cys-48-Cys-66. Residue Lys-85 is modified to Lysine amide.

In terms of tissue distribution, expressed by the venom gland.

It is found in the secreted. Its function is as follows. Alpha toxins bind voltage-independently at site-3 of sodium channels (Nav) and inhibit the inactivation of the activated channels, thereby blocking neuronal transmission. Affects the tetrodotoxin-sensitive sodium current permeability of F-11 rat neuroblastoma cells. Produces a dose dependent increase in amplitude and duration of the current. This chain is Alpha-toxin To2, found in Tityus obscurus (Amazonian scorpion).